The chain runs to 471 residues: MSNKYNNLLKEVAAKYASIILNDAKIKSLTSINSAEYLYDSFVEISKLPLEKKLPLKWKLITVKENICTKTNLTTAASNMLKDYNSPFDASIVESLKKAGGIILGKTNMDEFAMGVKSENNLFGRTVNPVVKDSNYDVGGSSGGAAAAIAADICYASVGSDTGGSIRLPAAYVGCVGFKPSFGRISRYGMLAFANSFDTVGIAANNVKGVTKVFNVLDHPDINDSTCLTKEARYFVKEQHKKLSRKPIKIGIPIDWNVSETHPNVLDKWNEFISLLKSNGYLVQEIQLPISLYANSVYSTMAYAEATSNLAKYNTIAFGNCLDEKFEEEIISSTARSFFLGDEVKKRLLLGAYSLARMNSSDLFSKARYVRRAIQLEFNKNFFLPSFSVDDPRGDIDFIVTPSFFNSSQPIETPSSYSHLSDTMLVPANMAGIPSVSIPFGTLNNGLPMGIQIMAQYLNDEDLLSFAGQFA.

Active-site charge relay system residues include Lys-64 and Ser-141. Ser-165 (acyl-ester intermediate) is an active-site residue.

The protein belongs to the amidase family. GatA subfamily. Subunit of the heterotrimeric GatCAB amidotransferase (AdT) complex, composed of A, B and C subunits.

It localises to the mitochondrion. The catalysed reaction is L-glutamyl-tRNA(Gln) + L-glutamine + ATP + H2O = L-glutaminyl-tRNA(Gln) + L-glutamate + ADP + phosphate + H(+). In terms of biological role, allows the formation of correctly charged Gln-tRNA(Gln) through the transamidation of misacylated Glu-tRNA(Gln) in the mitochondria. The reaction takes place in the presence of glutamine and ATP through an activated gamma-phospho-Glu-tRNA(Gln). This Schizosaccharomyces pombe (strain 972 / ATCC 24843) (Fission yeast) protein is Glutamyl-tRNA(Gln) amidotransferase subunit A, mitochondrial.